The sequence spans 254 residues: L-arabinose 1-dehydrogenase (NAD(P)(+)) (254 aa).

Residue Tyr-142 is the Proton acceptor of the active site. Positions 142 and 146 each coordinate NAD(+).

The protein belongs to the NAD(P)-dependent epimerase/dehydratase family. In terms of assembly, homotetramer.

It catalyses the reaction alpha-L-arabinopyanose + NAD(+) = L-arabinono-1,4-lactone + NADH + H(+). It carries out the reaction alpha-L-arabinopyanose + NADP(+) = L-arabinono-1,4-lactone + NADPH + H(+). It participates in carbohydrate degradation; L-arabinose degradation via L-arabinono-1,4-lactone pathway. L-AraDH initiates the degradation of L-arabinose. Catalyzes the NAD(P)(+)-dependent conversion of L-arabinose to L-arabino-gamma-lactone. It is highly specific for L-arabinose as substrate and can use both NADP(+) and NAD(+) as electron acceptor, with a slight preference for NADP(+). In Haloferax volcanii (strain ATCC 29605 / DSM 3757 / JCM 8879 / NBRC 14742 / NCIMB 2012 / VKM B-1768 / DS2) (Halobacterium volcanii), this protein is L-arabinose 1-dehydrogenase (NAD(P)(+)).